Reading from the N-terminus, the 335-residue chain is uncharacterized protein (335 aa).

Residues 201 to 236 (GPMAKNKARRKEDNYDTHNCDDANQDKKEEAEGKNT) are disordered. Residues 210 to 235 (RKEDNYDTHNCDDANQDKKEEAEGKN) show a composition bias toward basic and acidic residues.

Dispensable for normal development and fertility. This is an uncharacterized protein from Homo sapiens (Human).